A 172-amino-acid polypeptide reads, in one-letter code: Peptidyl-tRNA hydrolase (172 aa).

Y10 contributes to the tRNA binding site. Residue H15 is the Proton acceptor of the active site. TRNA-binding residues include F59, N61, and N101.

The protein belongs to the PTH family. In terms of assembly, monomer.

It localises to the cytoplasm. The catalysed reaction is an N-acyl-L-alpha-aminoacyl-tRNA + H2O = an N-acyl-L-amino acid + a tRNA + H(+). Functionally, hydrolyzes ribosome-free peptidyl-tRNAs (with 1 or more amino acids incorporated), which drop off the ribosome during protein synthesis, or as a result of ribosome stalling. Its function is as follows. Catalyzes the release of premature peptidyl moieties from peptidyl-tRNA molecules trapped in stalled 50S ribosomal subunits, and thus maintains levels of free tRNAs and 50S ribosomes. The chain is Peptidyl-tRNA hydrolase from Rubrobacter xylanophilus (strain DSM 9941 / JCM 11954 / NBRC 16129 / PRD-1).